Here is a 188-residue protein sequence, read N- to C-terminus: Photosystem I assembly protein Ycf4 (188 aa).

2 consecutive transmembrane segments (helical) span residues 26–46 (YFWA…GLSS) and 68–88 (LVMG…WFVI).

It belongs to the Ycf4 family.

The protein localises to the cellular thylakoid membrane. Seems to be required for the assembly of the photosystem I complex. The chain is Photosystem I assembly protein Ycf4 from Synechococcus elongatus (strain ATCC 33912 / PCC 7942 / FACHB-805) (Anacystis nidulans R2).